Consider the following 366-residue polypeptide: Putative actin-9 (366 aa).

Belongs to the actin family. Polymerization of globular actin (G-actin) leads to a structural filament (F-actin) in the form of a two-stranded helix. The binding of profilin to monomeric G-actin cause the sequestration of actin into profilactin complexes, and prevents the polymerization.

The protein localises to the cytoplasm. The protein resides in the cytoskeleton. Actins are highly conserved proteins that are involved in various types of cell motility and are ubiquitously expressed in all eukaryotic cells. Essential component of cell cytoskeleton; plays an important role in cytoplasmic streaming, cell shape determination, cell division, organelle movement and extension growth. This Arabidopsis thaliana (Mouse-ear cress) protein is Putative actin-9 (ACT9).